Consider the following 107-residue polypeptide: Defensin-like protein 242 (107 aa).

The signal sequence occupies residues 1–22 (MKVVAIFLASCVLFSLIPTHLS). Cystine bridges form between Cys45/Cys100, Cys55/Cys84, Cys65/Cys94, and Cys82/Cys96.

Belongs to the DEFL family.

It is found in the secreted. The chain is Defensin-like protein 242 (SCRL10) from Arabidopsis thaliana (Mouse-ear cress).